The primary structure comprises 188 residues: Adenine phosphoribosyltransferase (188 aa).

This sequence belongs to the purine/pyrimidine phosphoribosyltransferase family. In terms of assembly, homodimer.

It localises to the cytoplasm. The catalysed reaction is AMP + diphosphate = 5-phospho-alpha-D-ribose 1-diphosphate + adenine. The protein operates within purine metabolism; AMP biosynthesis via salvage pathway; AMP from adenine: step 1/1. Catalyzes a salvage reaction resulting in the formation of AMP, that is energically less costly than de novo synthesis. The sequence is that of Adenine phosphoribosyltransferase from Paraburkholderia phytofirmans (strain DSM 17436 / LMG 22146 / PsJN) (Burkholderia phytofirmans).